A 442-amino-acid polypeptide reads, in one-letter code: Trigger factor (442 aa).

Positions 162–247 (GDTVTIDYKG…IHEVKSKQLP (86 aa)) constitute a PPIase FKBP-type domain.

Belongs to the FKBP-type PPIase family. Tig subfamily.

It localises to the cytoplasm. It catalyses the reaction [protein]-peptidylproline (omega=180) = [protein]-peptidylproline (omega=0). Functionally, involved in protein export. Acts as a chaperone by maintaining the newly synthesized protein in an open conformation. Functions as a peptidyl-prolyl cis-trans isomerase. This is Trigger factor from Lactobacillus acidophilus (strain ATCC 700396 / NCK56 / N2 / NCFM).